A 644-amino-acid polypeptide reads, in one-letter code: MRLSELTHPNQLHGLSIAELEDVARQIRERHLEVVSTSGGHLGPGLGVVELTLALYQTLDLDHDRVVWDVGHQAYPHKLITGRYGDFNTLRQQGGVAGYLKRCESSFDHFGAGHASTSISAALGMAVARERRGESFKCVAVIGDGALTGGIALEAINHAGHMPNTPFLVVLNDNDMSISPPVGALSTHLNRMRHSAPVQFISDSVEERVKSLPFMGGELPAELDLLKGSMRRLSVPKVGAVFEELGFTYMGPIDGHDIERMVRTFETAHKVGGPVLVHVVTTKGKGYPYAEADQVGYHAQSAFDLSTGKALPSKGKKPPSYSKVFGETLIKLCQQDSTVVGITAAMATGTGLDLLQKAVPEQYIDVGIAEQHAVTLAAGMACEGLKPVLAIYSTFLQRAFDQLIHDVGIQNLPVTFVMDRAGIVGADGPTHQGQYDISYFRAIPNFTVMAPKDEAELQRMLVTCLQHQGPAALRIPRGSGEGVPLLDEGWKPLAIGRGEVLCEGDDLLIVAYGVMVPAAMITAQLLQEAGIKATVINARFLRPLDQALIHPLARRIGSVVTMEEGALAGGFGAAVVESLSDQDVLVPTFRIGIPDQLVDHASPQQSREALGLTPTQMSERIQEHFCLNSKPSLVGQEAPQALST.

Residues His-72 and 113–115 contribute to the thiamine diphosphate site; that span reads GHA. Asp-144 is a Mg(2+) binding site. Thiamine diphosphate-binding positions include 145–146, Asn-174, Tyr-287, and Glu-370; that span reads GA. Asn-174 lines the Mg(2+) pocket.

The protein belongs to the transketolase family. DXPS subfamily. As to quaternary structure, homodimer. The cofactor is Mg(2+). Thiamine diphosphate serves as cofactor.

It catalyses the reaction D-glyceraldehyde 3-phosphate + pyruvate + H(+) = 1-deoxy-D-xylulose 5-phosphate + CO2. Its pathway is metabolic intermediate biosynthesis; 1-deoxy-D-xylulose 5-phosphate biosynthesis; 1-deoxy-D-xylulose 5-phosphate from D-glyceraldehyde 3-phosphate and pyruvate: step 1/1. Its function is as follows. Catalyzes the acyloin condensation reaction between C atoms 2 and 3 of pyruvate and glyceraldehyde 3-phosphate to yield 1-deoxy-D-xylulose-5-phosphate (DXP). The chain is 1-deoxy-D-xylulose-5-phosphate synthase from Prochlorococcus marinus (strain MIT 9313).